Consider the following 908-residue polypeptide: Translation initiation factor IF-2 (908 aa).

The interval 145–312 is disordered; it reads EIPGLTQRAK…KGKKRQAEKI (168 aa). Positions 167–177 are enriched in basic and acidic residues; it reads VVERPEARPSA. Low complexity-rich tracts occupy residues 194–217 and 263–276; these read RPEGGYRPAGPRPAGQRPEGPRPG and VAGAGKKGPAGAAV. A compositionally biased stretch (basic and acidic residues) spans 278-296; the sequence is KRKEEFKKTELFEKHERVF. The region spanning 408 to 577 is the tr-type G domain; sequence KRPPVVTIMG…LLQADVLELK (170 aa). A G1 region spans residues 417 to 424; it reads GHVDHGKT. Residue 417–424 coordinates GTP; the sequence is GHVDHGKT. The interval 442–446 is G2; the sequence is GITQH. The segment at 463-466 is G3; the sequence is DTPG. Residues 463–467 and 517–520 contribute to the GTP site; these read DTPGH and NKID. The segment at 517-520 is G4; the sequence is NKID. The G5 stretch occupies residues 553–555; that stretch reads SAK.

The protein belongs to the TRAFAC class translation factor GTPase superfamily. Classic translation factor GTPase family. IF-2 subfamily.

It localises to the cytoplasm. In terms of biological role, one of the essential components for the initiation of protein synthesis. Protects formylmethionyl-tRNA from spontaneous hydrolysis and promotes its binding to the 30S ribosomal subunits. Also involved in the hydrolysis of GTP during the formation of the 70S ribosomal complex. The polypeptide is Translation initiation factor IF-2 (Geotalea daltonii (strain DSM 22248 / JCM 15807 / FRC-32) (Geobacter daltonii)).